Here is a 209-residue protein sequence, read N- to C-terminus: Ubiquitin-conjugating enzyme E2 S (209 aa).

Residues 14–160 (QTIRQVMREL…ARMMTEIHAQ (147 aa)) form the UBC core domain. The active-site Glycyl thioester intermediate is the Cys98. Residues 164-209 (CGVGASGDAKDDDGPSTKKHAGLDKKLQDKKKEKLLKEKKRMLKRL) are disordered. Positions 171–199 (DAKDDDGPSTKKHAGLDKKLQDKKKEKLL) are enriched in basic and acidic residues. Positions 200–209 (KEKKRMLKRL) are enriched in basic residues.

The protein belongs to the ubiquitin-conjugating enzyme family.

It carries out the reaction S-ubiquitinyl-[E1 ubiquitin-activating enzyme]-L-cysteine + [E2 ubiquitin-conjugating enzyme]-L-cysteine = [E1 ubiquitin-activating enzyme]-L-cysteine + S-ubiquitinyl-[E2 ubiquitin-conjugating enzyme]-L-cysteine.. The protein operates within protein modification; protein ubiquitination. Its function is as follows. Catalyzes the covalent attachment of ubiquitin to other proteins. Acts as an essential factor of the anaphase promoting complex/cyclosome (APC/C), a cell cycle-regulated ubiquitin ligase that controls progression through mitosis. Acts by specifically elongating polyubiquitin chains initiated by the E2 enzyme vih/UbcH10 on APC/C substrates, enhancing the degradation of APC/C substrates by the proteasome and promoting mitotic exit. The sequence is that of Ubiquitin-conjugating enzyme E2 S from Drosophila yakuba (Fruit fly).